Consider the following 858-residue polypeptide: MANVSVAAEWQLLYDRYYRKPEIYQMKWKHVDLSRNKVACASFGGPIAVIRDDSKIVQLYAESALRKLRIFNSAGILLSETVWKHPGGRLIGMSWSDDQTLICIVQDGTIYRYNIHAELIEPNMSMGQECFEQNVVECVFWGNGVVCLTEGGQLICIFDFKTMKPSKLPDVPGLAEDDLLQPICLTVREPKYTMSGIAEVLVAVGDDIFVVEEDMVQTIRFDEPSVDDSEMQNDDSGNLIGVVQKMIVSPNGKFLTLFTHDGRIVVVDMETKQIAIDYSCESALPPQQMAWCGMDSVLLYWDEDLMMVGPVGDPVHYFYDEPIILIPECDGVRILSNTNLEFLQRVPDSTESIFKIGSTSPAALLYDALDHFDRRSAKADENLRLIRSSLSEAVESCIDAAGHEFDVTRQRALLRAASYGQAFCSNFQRERVQETCRTLRVLNAVRDPAIGIPLSIQQYKLLTPVVLISRLINANCHLLALRISEYLDMNKEVVIMHWACAKITASPSTPDSHLLEILLDKLQLCKGISYAAVATHADNCGRRKLAAMLVEHEPRSTKQVPLLLSIGEEDTALVKATESGDTDLVYLVIFHIWQKRPPLEFFAMIQGRVLARDLFVAYARCHKHEFLKDFFLSTGQIHEVAFLLWKESWDMGKNPMASKGSPLHGPRIKLIEKARNLFSQTKEHTFESKAAEEHAKLLKIQHELEASTKQAIFVDSSINDTIRTCIVLGNNRAAIKVKTEFKVSDKRWYWLKAFALATIKDWAALEKFSKEKRPPMGFRPFVEACIDADEKAEALKYIPKLSDLVERGEAYARIGMAKEAADCAAQANDGGELLERFRKTFVQNAIFDTLLMPFQGAS.

Belongs to the VPS16 family. Core component of at least two putative endosomal tethering complexes, the homotypic fusion and vacuole protein sorting (HOPS) complex and the class C core vacuole/endosome tethering (CORVET) complex. Their common core is composed of the class C Vps proteins VPS11, VCL1, VPS18 and VPS33, which in HOPS further associates with VPS39 and VPS41 and in CORVET with VPS3. Expressed in roots, leaves, stems, siliques, flowers and mature pollen.

It is found in the vacuole membrane. Its subcellular location is the prevacuolar compartment membrane. Required for vacuole biogenesis and vacuole enlargment in dividing and expanding cells. Involved in the docking or fusion of prevacuolar vesicles. Important for the function of both male and female gametophytes, but is not essential for the germination and development of pollen. The polypeptide is Protein VACUOLELESS1 (VCL1) (Arabidopsis thaliana (Mouse-ear cress)).